A 235-amino-acid polypeptide reads, in one-letter code: Chalcone--flavanone isomerase 1 (235 aa).

Residues Thr50 and Ser192 each contribute to the substrate site.

Belongs to the chalcone isomerase family.

The enzyme catalyses a chalcone = a flavanone.. Its pathway is secondary metabolite biosynthesis; flavonoid biosynthesis. Its function is as follows. Catalyzes the intramolecular cyclization of bicyclic chalcones into tricyclic (S)-flavanones. Responsible for the isomerization of 4,2',4',6'-tetrahydroxychalcone (also termed chalcone) into naringenin. The sequence is that of Chalcone--flavanone isomerase 1 (CHI1) from Chrysanthemum morifolium (Florist's daisy).